The following is an 89-amino-acid chain: MEAARKALAVVAVLGAGGGVGSILFALVTPGELQKQLMLQEMPERDSRRRDEAVRTKELVMATLKDAAATKENVAWRRNWTVRGDGRSA.

The Mitochondrial matrix segment spans residues 1–7 (MEAARKA). The chain crosses the membrane as a helical span at residues 8–28 (LAVVAVLGAGGGVGSILFALV). The mediates lipid-binding stretch occupies residues 23-80 (ILFALVTPGELQKQLMLQEMPERDSRRRDEAVRTKELVMATLKDAAATKENVAWRRNW). Over 29-89 (TPGELQKQLM…WTVRGDGRSA (61 aa)) the chain is Mitochondrial intermembrane.

The protein belongs to the UQCC3 family. In terms of assembly, associates with the ubiquinol-cytochrome c reductase complex (mitochondrial respiratory chain complex III(CIII) or cytochrome b-c1 complex). Interacts with UQCC1. Forms a complex, named COMC, composed of UQCC1, UQCC2; UQCC3 and UQCC4; mediates MT-CYB hemylation and association with the first nuclear-encoded complex III subunit UQCRQ. Post-translationally, probably cleaved by OMA1 under mitochondrial stress conditions.

The protein localises to the mitochondrion inner membrane. Required for the assembly of the ubiquinol-cytochrome c reductase complex (mitochondrial respiratory chain complex III or cytochrome b-c1 complex), mediating cytochrome b recruitment and probably stabilization within the complex. Thereby, plays an important role in ATP production by mitochondria. Cardiolipin-binding protein, it may also control the cardiolipin composition of mitochondria membranes and their morphology. In Rattus norvegicus (Rat), this protein is Ubiquinol-cytochrome-c reductase complex assembly factor 3.